The sequence spans 323 residues: NADH-ubiquinone oxidoreductase chain 1 (323 aa).

The next 8 membrane-spanning stretches (helical) occupy residues 9–29 (ILNPLIYMVPVLLAVAFLTLI), 76–96 (LFVLPVLALTLALTLWAPMPM), 107–127 (ILFVLALSSLAVYSILGSGWA), 145–165 (ISYEVSLGLILLSVIIFSGGF), 175–195 (EATWLALPAWPLAAMWYISTL), 227–247 (LFFLAEYANILLMNTLSAVLF), 258–278 (EFTSLTLMTKAALLSMVFLWV), and 298–318 (FLPLTLALVIWHLSLSTACAG).

This sequence belongs to the complex I subunit 1 family.

The protein resides in the mitochondrion inner membrane. It carries out the reaction a ubiquinone + NADH + 5 H(+)(in) = a ubiquinol + NAD(+) + 4 H(+)(out). In terms of biological role, core subunit of the mitochondrial membrane respiratory chain NADH dehydrogenase (Complex I) that is believed to belong to the minimal assembly required for catalysis. Complex I functions in the transfer of electrons from NADH to the respiratory chain. The immediate electron acceptor for the enzyme is believed to be ubiquinone. The sequence is that of NADH-ubiquinone oxidoreductase chain 1 (MT-ND1) from Gadus morhua (Atlantic cod).